The primary structure comprises 94 residues: DNA-binding protein HU (94 aa).

The protein belongs to the bacterial histone-like protein family. In terms of assembly, homodimer.

In terms of biological role, histone-like DNA-binding protein which is capable of wrapping DNA to stabilize it, and thus to prevent its denaturation under extreme environmental conditions. It is essential for heterocyst differentiation. This is DNA-binding protein HU (hup) from Nostoc sp. (strain PCC 7120 / SAG 25.82 / UTEX 2576).